The following is a 176-amino-acid chain: ATP-dependent protease subunit HslV (176 aa).

The active site involves T2. The Na(+) site is built by S157, C160, and T163.

It belongs to the peptidase T1B family. HslV subfamily. A double ring-shaped homohexamer of HslV is capped on each side by a ring-shaped HslU homohexamer. The assembly of the HslU/HslV complex is dependent on binding of ATP.

It is found in the cytoplasm. It catalyses the reaction ATP-dependent cleavage of peptide bonds with broad specificity.. Its activity is regulated as follows. Allosterically activated by HslU binding. Protease subunit of a proteasome-like degradation complex believed to be a general protein degrading machinery. The protein is ATP-dependent protease subunit HslV of Buchnera aphidicola subsp. Baizongia pistaciae (strain Bp).